A 484-amino-acid polypeptide reads, in one-letter code: Hexokinase-1 (484 aa).

Residues 25–465 (KTLQDHLDEL…SGVGAALVSA (441 aa)) form the Hexokinase domain. The interval 79-212 (DGNEHGSYLA…CNNVRLNAIL (134 aa)) is hexokinase small subdomain. 90–95 (DLGGTN) is an ATP binding site. Substrate is bound by residues 160–161 (SY), 177–178 (TK), and 213–214 (SD). Residues 213–454 (SDTTGTLVAS…SKVVTIPAED (242 aa)) are hexokinase large subdomain. Thr-237 is a binding site for ATP. Positions 240, 269, and 302 each coordinate substrate. ATP is bound by residues 307 to 308 (GC), 344 to 348 (TSVLS), and 419 to 423 (SVYNL).

This sequence belongs to the hexokinase family. In terms of assembly, monomer.

It catalyses the reaction a D-hexose + ATP = a D-hexose 6-phosphate + ADP + H(+). The enzyme catalyses D-mannose + ATP = D-mannose 6-phosphate + ADP + H(+). The catalysed reaction is D-fructose + ATP = D-fructose 6-phosphate + ADP + H(+). It carries out the reaction D-glucose + ATP = D-glucose 6-phosphate + ADP + H(+). It functions in the pathway carbohydrate metabolism; hexose metabolism. The protein operates within carbohydrate degradation; glycolysis; D-glyceraldehyde 3-phosphate and glycerone phosphate from D-glucose: step 1/4. Catalyzes the phosphorylation of hexose (six-carbon sugars) to hexose 6-phosphate. Phosphorylates D-fructose, D-mannose and, to a lower extent, D-glucose. Compared to hxk2, has low affinity for D-glucose. The protein is Hexokinase-1 of Schizosaccharomyces pombe (strain 972 / ATCC 24843) (Fission yeast).